We begin with the raw amino-acid sequence, 949 residues long: Leucine--tRNA ligase (949 aa).

The 'HIGH' region motif lies at 68–79; it reads PYPSGEGLHVGH. Positions 540-562 are disordered; that stretch reads VPDYSPVSFDPDDAGSEPSPPLG. A 'KMSKS' region motif is present at residues 722–726; the sequence is KIGKS. ATP is bound at residue lysine 725.

This sequence belongs to the class-I aminoacyl-tRNA synthetase family.

The protein localises to the cytoplasm. It carries out the reaction tRNA(Leu) + L-leucine + ATP = L-leucyl-tRNA(Leu) + AMP + diphosphate. This Mycolicibacterium gilvum (strain PYR-GCK) (Mycobacterium gilvum (strain PYR-GCK)) protein is Leucine--tRNA ligase.